Consider the following 198-residue polypeptide: Putative pseudouridine methyltransferase (198 aa).

Residues L132 and C186 each contribute to the S-adenosyl-L-methionine site.

The protein belongs to the methyltransferase superfamily. TrmY family.

It localises to the cytoplasm. The chain is Putative pseudouridine methyltransferase from Shewanella frigidimarina (strain NCIMB 400).